The sequence spans 5101 residues: Malformin synthetase mlfA (5101 aa).

Residues 225 to 616 form an adenylation 1 region; that stretch reads ERHAANRPHS…CGRADTQVKL (392 aa). The 74-residue stretch at 757 to 830 folds into the Carrier 1 domain; that stretch reads SRLEQKIQLA…EAASLAEVQE (74 aa). Ser791 bears the O-(pantetheine 4'-phosphoryl)serine mark. The segment at 868–1299 is condensation 1; that stretch reads EDVFPCTTMQ…ALNTLSLLQA (432 aa). The tract at residues 1327 to 1716 is adenylation 2; it reads DRWVTRQPEG…GRKDTQVKLR (390 aa). Residues 1854–1931 enclose the Carrier 2 domain; it reads TPTLELERTL…QLAAEVGEPA (78 aa). At Ser1891 the chain carries O-(pantetheine 4'-phosphoryl)serine. Disordered stretches follow at residues 1932–1961 and 1994–2020; these read GQSASSASSTTEEGFTFSTPDDSSTNDGVD and GGSSSNKTPSVSSSSSSSSSSKRKKNA. Low complexity-rich tracts occupy residues 1934 to 1958 and 1996 to 2013; these read SASSASSTTEEGFTFSTPDDSSTND and SSSNKTPSVSSSSSSSSS. Residues 2066 to 2481 are condensation 2; that stretch reads EDIYPATALQ…AVSCSDKETL (416 aa). The adenylation 3 stretch occupies residues 2504-2896; the sequence is RRTPHAPAVC…IGRRDGQLKL (393 aa). The Carrier 3 domain maps to 3032–3108; sequence RPVTSQEHEM…QLICHLNTIR (77 aa). Ser3069 is subject to O-(pantetheine 4'-phosphoryl)serine. Condensation stretches follow at residues 3125-3590 and 3611-4030; these read WVAL…TYDQ and NIYP…EHLV. Residues 4055–4445 are adenylation 4; it reads HNSRQAVCAW…VGRKDNQIKF (391 aa). In terms of domain architecture, Carrier 4 spans 4579–4655; it reads MPSTAAERKM…DLSDQAKSLI (77 aa). Ser4616 carries the O-(pantetheine 4'-phosphoryl)serine modification. The condensation 5 stretch occupies residues 4712–5097; the sequence is IVVDIPGPID…KIVGLLRHPE (386 aa).

The protein belongs to the NRP synthetase family.

Its pathway is secondary metabolite biosynthesis. In terms of biological role, nonribosomal peptide synthetase; part of the gene cluster that mediates the biosynthesis of malformins, cyclic pentapeptides with a disulfide bond between 2 consecutive cysteins, that show potential anti-tumor as well as antimalarial and antitrypanosomal properties. The nonribosomal peptide synthetase mlfA is responsible of the formation of the cyclic pentapeptide. The malformin biosynthesis clusters in malformin-producing fungi also contain enzymes involved in the formation of the disulfide bond between the two consecutive cysteins within malformins, in addition to additional tailoring enzymes such as methyltransferases or oxidoreductases. They are also composed of up to 4 major facilitator superfamily transporters, and transcription factors probably involved in the regulation of the expression of those clusters. This chain is Malformin synthetase mlfA, found in Aspergillus kawachii (strain NBRC 4308) (White koji mold).